We begin with the raw amino-acid sequence, 492 residues long: Glutamyl-tRNA(Gln) amidotransferase subunit A (492 aa).

Catalysis depends on charge relay system residues Lys-78 and Ser-158. The Acyl-ester intermediate role is filled by Ser-182.

It belongs to the amidase family. GatA subfamily. In terms of assembly, heterotrimer of A, B and C subunits.

It carries out the reaction L-glutamyl-tRNA(Gln) + L-glutamine + ATP + H2O = L-glutaminyl-tRNA(Gln) + L-glutamate + ADP + phosphate + H(+). Functionally, allows the formation of correctly charged Gln-tRNA(Gln) through the transamidation of misacylated Glu-tRNA(Gln) in organisms which lack glutaminyl-tRNA synthetase. The reaction takes place in the presence of glutamine and ATP through an activated gamma-phospho-Glu-tRNA(Gln). The sequence is that of Glutamyl-tRNA(Gln) amidotransferase subunit A from Rhodopseudomonas palustris (strain HaA2).